The sequence spans 1662 residues: MGEKSSQLKTLLKKNLLLKSKSKCGICCEIVFPIIIVLLVFAILVLVQLFKPNYDLIKTTQFSNRINENNIIIYGGKAGSLNVEQKGVIDMMKFQLSNELNKSISEVDVYFKEINDKSEMENYFQINSTQVFGGIWFESNQLSSVANTTNTNTTTNSFKYSIRLDSNSVLDSNKVKDNGIDSSDYLTKNWAYIQIAMDQAIFGYFGLDYKLVINGQRYPDPYVELWQKWINGRESVFKSAGSVFVSAALLIFTFRLVTELVVEKETKIREGMSIMGLNQYCYFISWIITSLVTALPIDLIIIVILKGSQVIHSTSWIIVIVTLILYLLTLQLLAFIFSMFFDKSKFAGLLTFLTILLINICGIFIGEYEIINIHIKLLLCCIFSPIGIACSFYIMSIRDIPDTISTINLNQVISEKQIIGTFVFNIIFYTFLIWYLDKIVKTEYGTKEPWYFLFTKRYWTVGAGKINKKNKNKEYNYNDIESTIQNNNNDNIEMVPIEVRNKTTISIRNLRKEFKTGDGLRIAVNDLNLDMFDGQIHGLLGPNGSGKSTTISMLTGLLSPTSGTAFILGNDITYQMNEIRKCTGVCLQTDIIWNQLTVLEHLEIYASLKGITNKKQIKSESLKMANEIDLGEKLHTPAGSLSGGQKRKLCLGIAFIGRSTIIFLDEVSSGMDPSSRRKVWDFLLSHKKGKTIILTTHYLDEADYLSDRISIISHGKLITDGSSLFLKNKYGVGYLLTCSKSLNTIDQFNVDQVTQFIRDQIPDVTVLSNAGSEISFRLPTASLPVFSKFFKDFDENLSNFHIDSYGISVTTLEEVFLKIGTDIDTDALSIADGNGNDDELKRSIGVSSTGIKSKQQLKALLIKRVKTSSKDFKAFLLSLLLPLLVIIGSIIVFKEVDNEVIFYNNSTEPLTFSLLQQYGKNDIVPIQLAGTTSEFDFNKFLSNSPYFNQFQYLNNSINFNQYLINNYKQSSGSINFTIPLSSSLINNTTKVISYNSLFNFNYIHSWPVHVNLINDALLRNHNGIGIECTSLPFDHILTSFQKASQGMNIQSIVYFIVIMMAGFSLMAGSFAGSISQERTNRIKRLLYISGCKKYIYWVSNLLWDYFFAFILLLITCIILAIVDDKFNDQFGLFFLSLVLFSLSIIPLSYLFSFKFSSFGKSTGAITAIHFSIGVIMTIAMIILRIEVIIKNSSSLENIADIIDIVFNILSPLYAFSRVIFIISGFPGSLRLGALKIDDYWSLHYASTPIIILSVHVVVWTIFILLIDYSPEFKGYLRNPKTILPPPPPIDEDSDVSAERIRLESMSPIPSTDQGSGGGGDMLQYKGLHKLFIGKGKNPNKNAVYNSTLGIPQGQTFGLLGLNGAGKTTTVSMLAGDILPTSGQITINGHDLVTDRAQALRGVSVCPQFDALITLLTAREQLSLYCAIKGVPDDKISLVVEAFIKMMDLGKIANSNTGGYSGGNKRKVSLSIAMLGNPSVVLIDEASSGCDPIIRYRQCQVISELGKNKVIILTSHSMSEIQALCSRMTIMRDGQFKCLGSTQHIKSKFGAGYSVEVKFKKSCLEVGIPQSLQCVLECFPNATILDQHDLMASLELPNPPENPIKVSEIFNILSTELSSILDDYSVSQTSLEQVFLKLTGATHEDRLNLNNQQQQQQTIPNSD.

7 consecutive transmembrane segments (helical) span residues 30–50 (IVFP…VQLF), 242–262 (SVFV…ELVV), 284–304 (ISWI…IIVI), 317–337 (IIVI…AFIF), 346–366 (FAGL…IFIG), 377–397 (LLLC…IMSI), and 417–437 (QIIG…WYLD). Residues 505–739 (ISIRNLRKEF…YGVGYLLTCS (235 aa)) form the ABC transporter 1 domain. 541 to 548 (GPNGSGKS) is an ATP binding site. A run of 7 helical transmembrane segments spans residues 872 to 892 (FKAF…SIIV), 1052 to 1072 (IVYF…SFAG), 1102 to 1122 (LWDY…LAIV), 1130 to 1150 (FGLF…LSYL), 1163 to 1183 (GAIT…MIIL), 1201 to 1221 (IIDI…VIFI), and 1246 to 1266 (STPI…ILLI). The ABC transporter 2 domain occupies 1322–1557 (LQYKGLHKLF…FGAGYSVEVK (236 aa)). 1360 to 1367 (GLNGAGKT) is an ATP binding site.

It belongs to the ABC transporter superfamily. ABCA family.

Its subcellular location is the membrane. This Dictyostelium discoideum (Social amoeba) protein is ABC transporter A family member 5 (abcA5).